The sequence spans 309 residues: Ribonuclease Z (309 aa).

The Zn(2+) site is built by His63, His65, Asp67, His68, His145, Asp216, and His274. Asp67 functions as the Proton acceptor in the catalytic mechanism.

The protein belongs to the RNase Z family. As to quaternary structure, homodimer. Zn(2+) serves as cofactor.

The catalysed reaction is Endonucleolytic cleavage of RNA, removing extra 3' nucleotides from tRNA precursor, generating 3' termini of tRNAs. A 3'-hydroxy group is left at the tRNA terminus and a 5'-phosphoryl group is left at the trailer molecule.. Functionally, zinc phosphodiesterase, which displays some tRNA 3'-processing endonuclease activity. Probably involved in tRNA maturation, by removing a 3'-trailer from precursor tRNA. In Streptococcus pyogenes serotype M6 (strain ATCC BAA-946 / MGAS10394), this protein is Ribonuclease Z.